Consider the following 293-residue polypeptide: MHFQDIISSLNSFWSKQGCLLLQPYDTEKGAGTMSPHTFLRAIGPEPWAVAYPEPCRRPTDGRYGDNPNRAQHYFQYQVLIKPSFDGIQETYLSSLEIIGIDPKDHDIRFVEDNWESPTLGAWGVGWEVWLDGMEVTQFTYFQQCGGLDCKPVSIEITYGLERLAMYLQNVDCIWDLSWNQTYKYGDIWLDLEKSNCKYNFEFSNPKRLKELFEIYEGEASDLVLNKLPGPALDFVLKCSHTFNLLEARGVISVTERTSTIGRIRNLARKVAELWLEERQALGFPLLEGDAKE.

It belongs to the class-II aminoacyl-tRNA synthetase family. Tetramer of two alpha and two beta subunits.

It is found in the cytoplasm. It catalyses the reaction tRNA(Gly) + glycine + ATP = glycyl-tRNA(Gly) + AMP + diphosphate. This Prochlorococcus marinus (strain MIT 9211) protein is Glycine--tRNA ligase alpha subunit.